Reading from the N-terminus, the 402-residue chain is Dynactin subunit 2 (402 aa).

Positions Met1–Pro26 are disordered. Coiled coils occupy residues Pro101 to Glu132 and Val357 to Gln402.

It belongs to the dynactin subunit 2 family. Subunit of dynactin, a multiprotein complex part of a tripartite complex with dynein and a adapter, such as BICDL1, BICD2 or HOOK3. The dynactin complex is built around ACTR1A/ACTB filament and consists of an actin-related filament composed of a shoulder domain, a pointed end and a barbed end. Its length is defined by its flexible shoulder domain. The soulder is composed of 2 DCTN1 subunits, 4 DCTN2 and 2 DCTN3.

The protein localises to the cytoplasm. Its subcellular location is the cytoskeleton. It localises to the microtubule organizing center. It is found in the centrosome. The protein resides in the membrane. Functionally, part of the dynactin complex that activates the molecular motor dynein for ultra-processive transport along microtubules. In the dynactin soulder domain, binds the ACTR1A filament and acts as a molecular ruler to determine the length. Modulates cytoplasmic dynein binding to an organelle, and plays a role in prometaphase chromosome alignment and spindle organization during mitosis. Involved in anchoring microtubules to centrosomes. The polypeptide is Dynactin subunit 2 (DCTN2) (Gallus gallus (Chicken)).